The following is a 220-amino-acid chain: Aspartic protease inhibitor 5 (220 aa).

Positions 1–23 (MMKCLFLLCLCLLPIVVFSSTFT) are cleaved as a signal peptide. Positions 24–32 (SQNLIDLPS) are excised as a propeptide. The short motif at 26 to 31 (NLIDLP) is the Vacuolar targeting signal element. The N-linked (GlcNAc...) asparagine glycan is linked to Asn51. 2 disulfide bridges follow: Cys80–Cys125 and Cys174–Cys185.

Belongs to the protease inhibitor I3 (leguminous Kunitz-type inhibitor) family.

It is found in the vacuole. Its function is as follows. Inhibitor of cathepsin D (aspartic protease). May also inhibit trypsin and chymotrypsin (serine proteases). Protects the plant by inhibiting proteases of invading organisms. The chain is Aspartic protease inhibitor 5 from Solanum tuberosum (Potato).